A 278-amino-acid polypeptide reads, in one-letter code: Large ribosomal subunit protein uL2 (278 aa).

Disordered stretches follow at residues 29–53 (PEKSLVRPLSKTGGRNSSGRITTRH) and 223–278 (GVAM…GKKR). Positions 255–268 (GRTRRPGKESDKLI) are enriched in basic and acidic residues. The segment covering 269-278 (VRRRRTGKKR) has biased composition (basic residues).

Belongs to the universal ribosomal protein uL2 family. Part of the 50S ribosomal subunit. Forms a bridge to the 30S subunit in the 70S ribosome.

Functionally, one of the primary rRNA binding proteins. Required for association of the 30S and 50S subunits to form the 70S ribosome, for tRNA binding and peptide bond formation. It has been suggested to have peptidyltransferase activity; this is somewhat controversial. Makes several contacts with the 16S rRNA in the 70S ribosome. The chain is Large ribosomal subunit protein uL2 from Kineococcus radiotolerans (strain ATCC BAA-149 / DSM 14245 / SRS30216).